The following is a 491-amino-acid chain: Chondroitin proteoglycan 2 (491 aa).

Residues 1–18 (MKTIVALGLLALATAASG) form the signal peptide. The 58-residue stretch at 21-78 (LQDCTNALDGLYAIGNCESQFLTCSGGIARIMDCPADLIYNEPLLICDWRHNVVGCEG) folds into the Chitin-binding type-2 1 domain. Residues cysteine 54 and cysteine 67 are joined by a disulfide bond. Residues 80–126 (GEASGEQSGEGSGEASGEGSGEASGEGSGEASGEGSGSGEGSGEENN) are disordered. Over residues 87 to 120 (SGEGSGEASGEGSGEASGEGSGEASGEGSGSGEG) the composition is skewed to gly residues. One can recognise a Chitin-binding type-2 2 domain in the interval 125-182 (NNVCEGLEDGAYSSGGCTTYYFFCTDNTARFLSCPTPLFYDVATQKCAWKALVEECNG). Cysteine 158 and cysteine 171 form a disulfide bridge. The segment at 187–217 (DGSGETSGEGSGEASGENSGENSGEGSGEFE) is disordered. Residues serine 197 and serine 201 are each glycosylated (O-linked (Xyl...) (chondroitin sulfate) serine). Over residues 200-210 (ASGENSGENSG) the composition is skewed to low complexity. Chitin-binding type-2 domains follow at residues 217–274 (EPTC…ECHG), 279–334 (APVC…ECQE), 367–423 (ENEC…KCLI), and 436–491 (PFDC…LQCH). 2 cysteine pairs are disulfide-bonded: cysteine 250-cysteine 263 and cysteine 310-cysteine 323. The segment at 336–367 (SGEESSGEASGEQSGEGSGEASGEASGEASGE) is disordered. A compositionally biased stretch (low complexity) spans 356 to 367 (ASGEASGEASGE). The cysteines at positions 399 and 412 are disulfide-linked. A glycan (N-linked (GlcNAc...) asparagine) is linked at asparagine 464. Residues cysteine 467 and cysteine 481 are joined by a disulfide bond.

In terms of biological role, required for polar body extrusion during cytokinesis in embryo development. Affects cortical granule size. Shown to have roles in meiotic chromosome segregation, osmotic barrier function and polarization in conjunction with cpg-2. Binds chitin. The sequence is that of Chondroitin proteoglycan 2 from Caenorhabditis briggsae.